A 389-amino-acid chain; its full sequence is Probable dual-specificity RNA methyltransferase RlmN (389 aa).

Positions 1 to 23 are disordered; the sequence is MTTQHPDTPETGITPGGTSGAFR. Glutamate 127 acts as the Proton acceptor in catalysis. The region spanning 133–376 is the Radical SAM core domain; it reads YPTRTTLCIS…ATLRDTRGQD (244 aa). Residues cysteine 140 and cysteine 381 are joined by a disulfide bond. Positions 147, 151, and 154 each coordinate [4Fe-4S] cluster. Residues 202 to 203, serine 236, 259 to 261, and asparagine 338 contribute to the S-adenosyl-L-methionine site; these read GE and SLH. Cysteine 381 functions as the S-methylcysteine intermediate in the catalytic mechanism.

The protein belongs to the radical SAM superfamily. RlmN family. Requires [4Fe-4S] cluster as cofactor.

The protein localises to the cytoplasm. It carries out the reaction adenosine(2503) in 23S rRNA + 2 reduced [2Fe-2S]-[ferredoxin] + 2 S-adenosyl-L-methionine = 2-methyladenosine(2503) in 23S rRNA + 5'-deoxyadenosine + L-methionine + 2 oxidized [2Fe-2S]-[ferredoxin] + S-adenosyl-L-homocysteine. It catalyses the reaction adenosine(37) in tRNA + 2 reduced [2Fe-2S]-[ferredoxin] + 2 S-adenosyl-L-methionine = 2-methyladenosine(37) in tRNA + 5'-deoxyadenosine + L-methionine + 2 oxidized [2Fe-2S]-[ferredoxin] + S-adenosyl-L-homocysteine. Specifically methylates position 2 of adenine 2503 in 23S rRNA and position 2 of adenine 37 in tRNAs. The protein is Probable dual-specificity RNA methyltransferase RlmN of Bifidobacterium longum (strain NCC 2705).